The following is a 211-amino-acid chain: RNA chaperone ProQ (211 aa).

The interval 113–147 (RRAVEKANNPKANKKRSVYHSGNKSENKKSAGKKF) is disordered.

It belongs to the ProQ family.

Its subcellular location is the cytoplasm. RNA chaperone with significant RNA binding, RNA strand exchange and RNA duplexing activities. This is RNA chaperone ProQ from Histophilus somni (strain 129Pt) (Haemophilus somnus).